The primary structure comprises 99 residues: Bacterial microcompartment shell vertex protein EutN (99 aa).

Residues 5 to 87 (MKLAVVTGQI…VDLCVIGIVD (83 aa)) enclose the BMV domain.

This sequence belongs to the CcmL/EutN family. In terms of assembly, homopentamer with a small central pore.

The protein resides in the bacterial microcompartment. The protein operates within amine and polyamine degradation; ethanolamine degradation. In terms of biological role, probably forms vertices in the bacterial microcompartment (BMC) shell dedicated to ethanolamine degradation. Expression of eutK, eutL, eutM, eutN, eutS (eutSMNLK) in E.coli leads to formation of a single BMC. Coexpression of eutQ with eutSMNLK permits E.coli to make cells with more than one mobile BMC, as is usual in vivo. It may be involved in transporting positively charged molecules into and out of the BMC. The ethanolamine (EA) catabolic bacterial microcompartment (BMC) probably concentrates low levels of ethanolamine catabolic enzymes, concentrates volatile reaction intermediates, keeps the level of toxic acetaldehyde low, generates enough acetyl-CoA to support cell growth, and maintains a pool of free coenzyme A (CoA) and NAD. Functionally, expression of the eut operon allows this bacteria to use ethanolamine (EA) as a carbon, nitrogen and energy source. It relies on cobalamin (vitamin B12) both as a cofactor for the ethanolamine ammonia-lyase (EAL) activity and to induce the operon. EA enhances bacterial survival in macrophages in a concentration-dependent manner, suggesting it is an important nutrient during infection. This is Bacterial microcompartment shell vertex protein EutN from Salmonella typhimurium (strain LT2 / SGSC1412 / ATCC 700720).